A 310-amino-acid polypeptide reads, in one-letter code: HTH-type transcriptional regulator PunR (310 aa).

The HTH lysR-type domain maps to 2-59 (WSEYSLEVVDAVARNGSFSAAAQELHRVPSAVSYTVRQLEEWLAVPLFERRHRDVELT). The H-T-H motif DNA-binding region spans 19-38 (FSAAAQELHRVPSAVSYTVR).

It belongs to the LysR transcriptional regulatory family.

It localises to the cytoplasm. Functionally, transcriptional regulator that activates the expression of punC, which encodes a purine nucleoside transporter. The polypeptide is HTH-type transcriptional regulator PunR (Escherichia coli O157:H7).